The sequence spans 317 residues: Ribose-phosphate pyrophosphokinase (317 aa).

Residues 43 to 45 (DGE) and 102 to 103 (RQ) each bind ATP. Residues His136 and Asp175 each contribute to the Mg(2+) site. Lys198 is a catalytic residue. Residues Arg200, Asp224, and 228–232 (DTAGT) contribute to the D-ribose 5-phosphate site.

Belongs to the ribose-phosphate pyrophosphokinase family. Class I subfamily. Homohexamer. Mg(2+) serves as cofactor.

The protein resides in the cytoplasm. The catalysed reaction is D-ribose 5-phosphate + ATP = 5-phospho-alpha-D-ribose 1-diphosphate + AMP + H(+). The protein operates within metabolic intermediate biosynthesis; 5-phospho-alpha-D-ribose 1-diphosphate biosynthesis; 5-phospho-alpha-D-ribose 1-diphosphate from D-ribose 5-phosphate (route I): step 1/1. Its function is as follows. Involved in the biosynthesis of the central metabolite phospho-alpha-D-ribosyl-1-pyrophosphate (PRPP) via the transfer of pyrophosphoryl group from ATP to 1-hydroxyl of ribose-5-phosphate (Rib-5-P). The chain is Ribose-phosphate pyrophosphokinase from Bacillus anthracis.